Consider the following 411-residue polypeptide: Cytosolic Fe-S cluster assembly factor narfl (411 aa).

[4Fe-4S] cluster contacts are provided by cysteine 11, cysteine 124, cysteine 180, cysteine 329, and cysteine 333.

Belongs to the NARF family. Component of the CIA complex.

Component of the cytosolic iron-sulfur protein assembly (CIA) complex, a multiprotein complex that mediates the incorporation of iron-sulfur cluster into extramitochondrial Fe/S proteins. This Danio rerio (Zebrafish) protein is Cytosolic Fe-S cluster assembly factor narfl (narfl).